The sequence spans 182 residues: CDP-diacylglycerol--glycerol-3-phosphate 3-phosphatidyltransferase (182 aa).

At Met-1–Phe-12 the chain is on the cytoplasmic side. Residues Arg-13–Ile-37 form a helical membrane-spanning segment. Residues Ile-38–Thr-60 lie on the Periplasmic side of the membrane. A helical transmembrane segment spans residues Arg-61–Leu-81. At Val-82–Tyr-86 the chain is on the cytoplasmic side. A helical membrane pass occupies residues His-87–Ser-107. Residues Leu-108 to Pro-145 lie on the Periplasmic side of the membrane. Residues Asp-146–Met-168 traverse the membrane as a helical segment. The Cytoplasmic portion of the chain corresponds to Phe-169–Glu-181.

This sequence belongs to the CDP-alcohol phosphatidyltransferase class-I family.

It is found in the cell inner membrane. It carries out the reaction a CDP-1,2-diacyl-sn-glycerol + sn-glycerol 3-phosphate = a 1,2-diacyl-sn-glycero-3-phospho-(1'-sn-glycero-3'-phosphate) + CMP + H(+). Its pathway is phospholipid metabolism; phosphatidylglycerol biosynthesis; phosphatidylglycerol from CDP-diacylglycerol: step 1/2. Catalyzes the conversion of cytidine diphosphate diacylglycerol (CDP-DG) and glycerol 3-phosphate into phosphatidylglycerol. Essential for the synthesis of anionic phospholipids, thereby playing a role in balancing the ratio of zwitterionic and anionic phospholipids, which is thought to be important for normal membrane function. This chain is CDP-diacylglycerol--glycerol-3-phosphate 3-phosphatidyltransferase, found in Yersinia enterocolitica serotype O:8 / biotype 1B (strain NCTC 13174 / 8081).